The sequence spans 190 residues: UPF0301 protein PSPTO_5037 (190 aa).

The protein belongs to the UPF0301 (AlgH) family.

The protein is UPF0301 protein PSPTO_5037 of Pseudomonas syringae pv. tomato (strain ATCC BAA-871 / DC3000).